Reading from the N-terminus, the 309-residue chain is tRNA dimethylallyltransferase (309 aa).

Position 8–15 (8–15 (GPTATGKS)) interacts with ATP. 10-15 (TATGKS) is a binding site for substrate. The interval 33–36 (DSRQ) is interaction with substrate tRNA.

It belongs to the IPP transferase family. Monomer. Mg(2+) is required as a cofactor.

It carries out the reaction adenosine(37) in tRNA + dimethylallyl diphosphate = N(6)-dimethylallyladenosine(37) in tRNA + diphosphate. Functionally, catalyzes the transfer of a dimethylallyl group onto the adenine at position 37 in tRNAs that read codons beginning with uridine, leading to the formation of N6-(dimethylallyl)adenosine (i(6)A). This is tRNA dimethylallyltransferase from Trichodesmium erythraeum (strain IMS101).